Reading from the N-terminus, the 120-residue chain is MAAKPTPSVSVHIRLTVDPNKINEFLEISRPMFDAVTAEPLNTFFEMYRDDKTPGVFKLVENWDADIDYMMNVQVKKEYYTPYHTALREILLKPHEVELYSRMPGNEWAKLDVKRYVDQE.

The ABM domain occupies 9 to 99; the sequence is VSVHIRLTVD…ILLKPHEVEL (91 aa).

It belongs to the LsrG family.

The protein operates within secondary metabolite biosynthesis. Its function is as follows. Putative monooxygenase; part of the gene cluster that mediates the biosynthesis of dibenzodioxocinones such as pestalotiollide B, a novel class of inhibitors against cholesterol ester transfer protein (CEPT). The biosynthesis initiates from condensation of acetate and malonate units catalyzed by the non-reducing PKS pks8/GME11356. Pks8/GME11356 lacks a thioesterase (TE) domain, which is important to the cyclizing of the third ring of atrochrysone carboxylic acid, and the esterase GME11355 might play the role of TE and catalyzes the cyclization reaction of the C ring. The lactamase-like protein GME11357 (or other beta-lactamases in Pestalotiopsis microspora) probably hydrolyzes the thioester bond between the ACP of pks8/GME11356 and the intermediate to release atrochrysone carboxylic acid, which is spontaneously dehydrates to form endocrocin anthrone. Endocrocin anthrone is further converted to emodin via the endocrocin intermediate. Emodin is then oxidized by several enzymes such as the Baeyer-Villiger oxidase GME11358, the oxidoreductase GME11367, the short chain dehydrogenase/reductase GME11373, as well as by other oxidoreductases from the cluster, to modify the A and C rings and open the B ring, and finally yield monodictyphenone. The prenyltransferase GME11375 may catalyze the addition reaction between the C5 side chains and the carbon bone of dibenzodioxocinones. The remaining biochemical reactions to the final product dibenzodioxocinones should be methylation catalyzed by methyltransferase GME11366 and reduction and lactonization reaction catalyzed by a series of oxidordeuctases. In Pestalotiopsis microspora, this protein is Putative monooxygenase GME11364.